Consider the following 190-residue polypeptide: Nuclear transcription factor Y subunit B-2 (190 aa).

Residues 1-30 (MGDSDRDSGGGQNGNNQNGQSSLSPREQDR) form a disordered region. The DNA-binding element occupies 32–38 (LPIANVS). The interval 59–70 (MQECVSEFISFV) is subunit association domain (SAD). A disordered region spans residues 168-190 (HMYGATGGGSDSGGGAASGRTRT). The span at 172–184 (ATGGGSDSGGGAA) shows a compositional bias: gly residues.

It belongs to the NFYB/HAP3 subunit family. Heterotrimeric transcription factor composed of three components, NF-YA, NF-YB and NF-YC. NF-YB and NF-YC must interact and dimerize for NF-YA association and DNA binding. Binds directly with DPB3-1. In terms of tissue distribution, ubiquitous. Predominantly expressed in flowers and siliques.

It localises to the nucleus. Its function is as follows. Component of the NF-Y/HAP transcription factor complex. The NF-Y complex stimulates the transcription of various genes by recognizing and binding to a CCAAT motif in promoters. In Arabidopsis thaliana (Mouse-ear cress), this protein is Nuclear transcription factor Y subunit B-2.